The chain runs to 120 residues: Large ribosomal subunit protein uL24 (120 aa).

Residues 1-33 form a disordered region; that stretch reads MTRQPHKQRNRQERAALHEKQKQVRAPLSPELR. The span at 10–22 shows a compositional bias: basic and acidic residues; sequence NRQERAALHEKQK.

It belongs to the universal ribosomal protein uL24 family. Part of the 50S ribosomal subunit.

One of two assembly initiator proteins, it binds directly to the 5'-end of the 23S rRNA, where it nucleates assembly of the 50S subunit. In terms of biological role, located at the polypeptide exit tunnel on the outside of the subunit. In Natronomonas pharaonis (strain ATCC 35678 / DSM 2160 / CIP 103997 / JCM 8858 / NBRC 14720 / NCIMB 2260 / Gabara) (Halobacterium pharaonis), this protein is Large ribosomal subunit protein uL24.